The primary structure comprises 276 residues: 4-hydroxy-tetrahydrodipicolinate reductase (276 aa).

Residues 18–23 and Asp-44 each bind NAD(+); that span reads GASGRM. Arg-45 provides a ligand contact to NADP(+). Residues 107 to 109 and 131 to 134 contribute to the NAD(+) site; these read GTT and APNM. His-164 acts as the Proton donor/acceptor in catalysis. His-165 serves as a coordination point for (S)-2,3,4,5-tetrahydrodipicolinate. The Proton donor role is filled by Lys-168. A (S)-2,3,4,5-tetrahydrodipicolinate-binding site is contributed by 174-175; the sequence is GT.

The protein belongs to the DapB family.

It localises to the cytoplasm. The catalysed reaction is (S)-2,3,4,5-tetrahydrodipicolinate + NAD(+) + H2O = (2S,4S)-4-hydroxy-2,3,4,5-tetrahydrodipicolinate + NADH + H(+). It carries out the reaction (S)-2,3,4,5-tetrahydrodipicolinate + NADP(+) + H2O = (2S,4S)-4-hydroxy-2,3,4,5-tetrahydrodipicolinate + NADPH + H(+). It functions in the pathway amino-acid biosynthesis; L-lysine biosynthesis via DAP pathway; (S)-tetrahydrodipicolinate from L-aspartate: step 4/4. Its function is as follows. Catalyzes the conversion of 4-hydroxy-tetrahydrodipicolinate (HTPA) to tetrahydrodipicolinate. The chain is 4-hydroxy-tetrahydrodipicolinate reductase from Aromatoleum aromaticum (strain DSM 19018 / LMG 30748 / EbN1) (Azoarcus sp. (strain EbN1)).